Reading from the N-terminus, the 543-residue chain is Probable E3 ubiquitin-protein ligase ARI9 (543 aa).

A disordered region spans residues 1 to 26 (MDFSDDDMIDNKSGEENYSYGGGNES). The segment at 124–332 (VNIQCGICFE…RHSGACNRFV (209 aa)) is TRIAD supradomain. Zn(2+) is bound by residues Cys-128, Cys-131, Cys-145, His-147, Cys-150, Cys-153, Cys-173, Cys-178, Cys-217, Cys-222, Cys-240, Cys-242, Cys-247, Cys-250, His-255, Cys-260, Cys-287, and Cys-290. The RING-type 1 zinc finger occupies 128-178 (CGICFESYTREEIARVSCGHPYCKTCWAGYITTKIEDGPGCLRVKCPEPSC). Residues 197–260 (EKYSRYILRS…SEDAHSPVDC (64 aa)) form an IBR-type zinc finger. The RING-type 2; atypical zinc-finger motif lies at 287 to 317 (CPECKRPIEKNDGCNHMTCSAPCGHEFCWIC). The active site involves Cys-300. Residues Cys-305, Cys-309, Cys-314, Cys-317, His-324, and Cys-328 each coordinate Zn(2+).

This sequence belongs to the RBR family. Ariadne subfamily. Zn(2+) serves as cofactor.

It carries out the reaction [E2 ubiquitin-conjugating enzyme]-S-ubiquitinyl-L-cysteine + [acceptor protein]-L-lysine = [E2 ubiquitin-conjugating enzyme]-L-cysteine + [acceptor protein]-N(6)-ubiquitinyl-L-lysine.. Its pathway is protein modification; protein ubiquitination. In terms of biological role, might act as an E3 ubiquitin-protein ligase, or as part of E3 complex, which accepts ubiquitin from specific E2 ubiquitin-conjugating enzymes and then transfers it to substrates. This chain is Probable E3 ubiquitin-protein ligase ARI9 (ARI9), found in Arabidopsis thaliana (Mouse-ear cress).